The following is a 349-amino-acid chain: Probable formaldehyde dehydrogenase AdhA (349 aa).

Zn(2+) contacts are provided by C44, H66, C97, C100, C103, C111, and C161.

Belongs to the zinc-containing alcohol dehydrogenase family. Zn(2+) is required as a cofactor.

Functionally, functions in the protection against aldehyde-stress. In Bacillus subtilis (strain 168), this protein is Probable formaldehyde dehydrogenase AdhA (adhA).